Here is a 541-residue protein sequence, read N- to C-terminus: Chaperonin GroEL 2 (541 aa).

ATP-binding positions include 30-33, Lys-51, 87-91, Gly-415, and Asp-496; these read TLGP and DGTTT.

Belongs to the chaperonin (HSP60) family. Forms a cylinder of 14 subunits composed of two heptameric rings stacked back-to-back. Interacts with the co-chaperonin GroES.

The protein resides in the cytoplasm. The catalysed reaction is ATP + H2O + a folded polypeptide = ADP + phosphate + an unfolded polypeptide.. Its function is as follows. Together with its co-chaperonin GroES, plays an essential role in assisting protein folding. The GroEL-GroES system forms a nano-cage that allows encapsulation of the non-native substrate proteins and provides a physical environment optimized to promote and accelerate protein folding. The protein is Chaperonin GroEL 2 of Gluconacetobacter diazotrophicus (strain ATCC 49037 / DSM 5601 / CCUG 37298 / CIP 103539 / LMG 7603 / PAl5).